We begin with the raw amino-acid sequence, 734 residues long: Photosystem I P700 chlorophyll a apoprotein A2 (734 aa).

Transmembrane regions (helical) follow at residues 46-69 (IFAS…FHVA), 135-158 (LYTG…LHLQ), 175-199 (LNHH…HVAI), 273-291 (IAHH…GHMY), 330-353 (LHFQ…QHMY), 369-395 (AALY…IFFI), 417-439 (AIIS…LYVH), and 517-535 (FLVH…LILV). Residues C559 and C568 each contribute to the [4Fe-4S] cluster site. 2 helical membrane-spanning segments follow: residues 575 to 596 (AFYL…YWHW) and 643 to 665 (LSVW…MFLI). Chlorophyll a-binding residues include H654, M662, and Y670. Residue W671 coordinates phylloquinone. A helical membrane pass occupies residues 707-727 (LVGLAHFSVGYIFTYAAFLIA).

This sequence belongs to the PsaA/PsaB family. The PsaA/B heterodimer binds the P700 chlorophyll special pair and subsequent electron acceptors. PSI consists of a core antenna complex that captures photons, and an electron transfer chain that converts photonic excitation into a charge separation. The eukaryotic PSI reaction center is composed of at least 11 subunits. P700 is a chlorophyll a/chlorophyll a' dimer, A0 is one or more chlorophyll a, A1 is one or both phylloquinones and FX is a shared 4Fe-4S iron-sulfur center. serves as cofactor.

The protein resides in the plastid. Its subcellular location is the chloroplast thylakoid membrane. The enzyme catalyses reduced [plastocyanin] + hnu + oxidized [2Fe-2S]-[ferredoxin] = oxidized [plastocyanin] + reduced [2Fe-2S]-[ferredoxin]. PsaA and PsaB bind P700, the primary electron donor of photosystem I (PSI), as well as the electron acceptors A0, A1 and FX. PSI is a plastocyanin-ferredoxin oxidoreductase, converting photonic excitation into a charge separation, which transfers an electron from the donor P700 chlorophyll pair to the spectroscopically characterized acceptors A0, A1, FX, FA and FB in turn. Oxidized P700 is reduced on the lumenal side of the thylakoid membrane by plastocyanin. The sequence is that of Photosystem I P700 chlorophyll a apoprotein A2 from Coffea arabica (Arabian coffee).